The sequence spans 75 residues: UPF0235 protein Ava_3894 (75 aa).

The interval 1 to 32 is disordered; that stretch reads MQKKVKVKPNSKQQKIAEQDDGSLTVHLKSPP.

It belongs to the UPF0235 family.

The chain is UPF0235 protein Ava_3894 from Trichormus variabilis (strain ATCC 29413 / PCC 7937) (Anabaena variabilis).